The primary structure comprises 365 residues: Probable 7-methylxanthine methyltransferase PCS2 (365 aa).

Tyr-19 lines the S-adenosyl-L-homocysteine pocket. Thr-26 contributes to the theobromine binding site. S-adenosyl-L-homocysteine is bound by residues Cys-62, Asp-99, Leu-100, Ser-134, and Phe-135. Tyr-152, His-155, and Trp-156 together coordinate theobromine. Asn-173 serves as a coordination point for Mg(2+). Arg-221 serves as a coordination point for theobromine. Asp-259, Phe-261, and Asn-262 together coordinate Mg(2+).

The protein belongs to the methyltransferase superfamily. Type-7 methyltransferase family. It depends on Mg(2+) as a cofactor.

It catalyses the reaction 7-methylxanthine + S-adenosyl-L-methionine = theobromine + S-adenosyl-L-homocysteine + H(+). No detectable N-methyltransferase activity. This Camellia ptilophylla (Cocoa tea) protein is Probable 7-methylxanthine methyltransferase PCS2.